Consider the following 239-residue polypeptide: Uracil-DNA glycosylase (239 aa).

Catalysis depends on D65, which acts as the Proton acceptor.

This sequence belongs to the uracil-DNA glycosylase (UDG) superfamily. UNG family.

It localises to the cytoplasm. The enzyme catalyses Hydrolyzes single-stranded DNA or mismatched double-stranded DNA and polynucleotides, releasing free uracil.. Its function is as follows. Excises uracil residues from the DNA which can arise as a result of misincorporation of dUMP residues by DNA polymerase or due to deamination of cytosine. In Levilactobacillus brevis (strain ATCC 367 / BCRC 12310 / CIP 105137 / JCM 1170 / LMG 11437 / NCIMB 947 / NCTC 947) (Lactobacillus brevis), this protein is Uracil-DNA glycosylase.